A 448-amino-acid chain; its full sequence is MRVASSLFLPVLLTEVWLVTSFNLSSHSPEASVHLESQDYENQTWEEYTRTDPREEEEEEEEKEEGKDEEYWLRASQQLSNETSSFGFNLLRKISMRHDGNVIFSPFGLSVAMVNLMLGTKGETKVQIENGLNLQALSQAGPLILPALFKKVKETFSSNRDLGLSQGSFAFIHKDFDIKETYFNLSKKYFDIEYVSINFQNSSQARGLINHCIVKETEGKIPKLFDEINPETKLILVDYVLFKGKWLTPFDPSFTEADTFHLDKYRAIKVPMMYREGNFTSTFDKKFRCHILKLPYQGNATMLVVLMEKTGDYLALEDYLTVDLVETWLQNMKTRKMEVFFPKFKLNQRYEMHELLKQMGIRRLFSTSADLSELSAMARNLQVSRVLQQSVLEVDERGTEAVSGTLSEIIAYSMPPAIKVNRPFHFIIYEEMSRMLLFLGRVVNPTVL.

The signal sequence occupies residues 1 to 21; that stretch reads MRVASSLFLPVLLTEVWLVTS. Residues 33–70 are disordered; that stretch reads VHLESQDYENQTWEEYTRTDPREEEEEEEEKEEGKDEE. Over residues 54 to 63 the composition is skewed to acidic residues; the sequence is REEEEEEEEK. Asn81 carries an N-linked (GlcNAc...) asparagine glycan. Residues 140-157 form a heparin-binding region; the sequence is AGPLILPALFKKVKETFS. N-linked (GlcNAc...) asparagine glycosylation is found at Asn184, Asn278, and Asn299.

This sequence belongs to the serpin family. Post-translationally, phosphorylated by FAM20C in the extracellular medium. As to expression, detectable in liver, but not in heart, brain, spleen, lung, kidney, skeletal muscle or testes.

Its subcellular location is the secreted. Inhibits activity of the coagulation protease factor Xa in the presence of PROZ, calcium and phospholipids. Also inhibits factor XIa in the absence of cofactors. The sequence is that of Protein Z-dependent protease inhibitor (Serpina10) from Mus musculus (Mouse).